We begin with the raw amino-acid sequence, 347 residues long: NADH-ubiquinone oxidoreductase chain 2 (347 aa).

A run of 10 helical transmembrane segments spans residues 13-33 (IFTG…WVGL), 60-80 (FLTQ…NSML), 96-116 (LMIM…FWVP), 123-143 (PLMS…SIMY), 149-169 (LNVN…SWGG), 178-198 (ILAY…PYNP), 201-221 (TILN…LLNL), 247-267 (TLLS…WVII), 274-294 (NSLI…YFYL), and 326-346 (LPTL…MLMI).

Belongs to the complex I subunit 2 family. Core subunit of respiratory chain NADH dehydrogenase (Complex I) which is composed of 45 different subunits. Interacts with TMEM242.

It is found in the mitochondrion inner membrane. The enzyme catalyses a ubiquinone + NADH + 5 H(+)(in) = a ubiquinol + NAD(+) + 4 H(+)(out). In terms of biological role, core subunit of the mitochondrial membrane respiratory chain NADH dehydrogenase (Complex I) which catalyzes electron transfer from NADH through the respiratory chain, using ubiquinone as an electron acceptor. Essential for the catalytic activity and assembly of complex I. The sequence is that of NADH-ubiquinone oxidoreductase chain 2 from Pan troglodytes (Chimpanzee).